Here is a 234-residue protein sequence, read N- to C-terminus: Ribonuclease HII (234 aa).

One can recognise an RNase H type-2 domain in the interval alanine 16–isoleucine 207. A divalent metal cation is bound by residues aspartate 22, glutamate 23, and aspartate 115.

The protein belongs to the RNase HII family. Mn(2+) serves as cofactor. Mg(2+) is required as a cofactor.

It localises to the cytoplasm. It catalyses the reaction Endonucleolytic cleavage to 5'-phosphomonoester.. Its function is as follows. Endonuclease that specifically degrades the RNA of RNA-DNA hybrids. The chain is Ribonuclease HII from Xylella fastidiosa (strain M12).